We begin with the raw amino-acid sequence, 157 residues long: MPRPTKFRRVEFFPENNYFVPWGKPKCEMHEVVLKVEELEAMRLKDIEELNQEQCAEKMEISRQTFQNIIDSARKKVAIALTEGKAIKISGGHYTTKLCKLKCIDCGEIYEINYEQDRHLCPNCGSEKVICNKKADFCRRWCKGQNRKEQYEESKNK.

The protein belongs to the UPF0251 family.

This chain is UPF0251 protein CLK_0815, found in Clostridium botulinum (strain Loch Maree / Type A3).